The sequence spans 508 residues: Photosystem II CP47 reaction center protein (508 aa).

6 helical membrane-spanning segments follow: residues 21-36 (SVHI…WAGS), 101-115 (IVFS…IWHW), 140-156 (GIHL…FGAF), 203-218 (IAAG…FHLS), 237-252 (VLSS…AFVV), and 457-472 (SFAL…HGAR).

This sequence belongs to the PsbB/PsbC family. PsbB subfamily. As to quaternary structure, PSII is composed of 1 copy each of membrane proteins PsbA, PsbB, PsbC, PsbD, PsbE, PsbF, PsbH, PsbI, PsbJ, PsbK, PsbL, PsbM, PsbT, PsbX, PsbY, PsbZ, Psb30/Ycf12, at least 3 peripheral proteins of the oxygen-evolving complex and a large number of cofactors. It forms dimeric complexes. Requires Binds multiple chlorophylls. PSII binds additional chlorophylls, carotenoids and specific lipids. as cofactor.

It is found in the plastid. It localises to the chloroplast thylakoid membrane. Functionally, one of the components of the core complex of photosystem II (PSII). It binds chlorophyll and helps catalyze the primary light-induced photochemical processes of PSII. PSII is a light-driven water:plastoquinone oxidoreductase, using light energy to abstract electrons from H(2)O, generating O(2) and a proton gradient subsequently used for ATP formation. The protein is Photosystem II CP47 reaction center protein of Olimarabidopsis pumila (Dwarf rocket).